A 79-amino-acid polypeptide reads, in one-letter code: ATP synthase subunit c (79 aa).

A run of 2 helical transmembrane segments spans residues 11–31 (IAVA…IGIL) and 59–79 (LVDA…FAVI).

The protein belongs to the ATPase C chain family. In terms of assembly, F-type ATPases have 2 components, F(1) - the catalytic core - and F(0) - the membrane proton channel. F(1) has five subunits: alpha(3), beta(3), gamma(1), delta(1), epsilon(1). F(0) has three main subunits: a(1), b(2) and c(10-14). The alpha and beta chains form an alternating ring which encloses part of the gamma chain. F(1) is attached to F(0) by a central stalk formed by the gamma and epsilon chains, while a peripheral stalk is formed by the delta and b chains.

It is found in the cell membrane. F(1)F(0) ATP synthase produces ATP from ADP in the presence of a proton or sodium gradient. F-type ATPases consist of two structural domains, F(1) containing the extramembraneous catalytic core and F(0) containing the membrane proton channel, linked together by a central stalk and a peripheral stalk. During catalysis, ATP synthesis in the catalytic domain of F(1) is coupled via a rotary mechanism of the central stalk subunits to proton translocation. In terms of biological role, key component of the F(0) channel; it plays a direct role in translocation across the membrane. A homomeric c-ring of between 10-14 subunits forms the central stalk rotor element with the F(1) delta and epsilon subunits. The chain is ATP synthase subunit c from Buchnera aphidicola subsp. Baizongia pistaciae (strain Bp).